We begin with the raw amino-acid sequence, 331 residues long: Ketol-acid reductoisomerase (NADP(+)) (331 aa).

In terms of domain architecture, KARI N-terminal Rossmann spans 2–181 (IKKYYESDAD…GATRAVVFET (180 aa)). NADP(+) contacts are provided by residues 25–28 (YGSQ), R48, S52, and 82–85 (DESQ). The active site involves H107. NADP(+) is bound at residue G133. Residues 182-327 (TFREETETDL…AEIRGLMPQF (146 aa)) enclose the KARI C-terminal knotted domain. Positions 190, 194, 226, and 230 each coordinate Mg(2+). Residue S251 coordinates substrate.

It belongs to the ketol-acid reductoisomerase family. The cofactor is Mg(2+).

It carries out the reaction (2R)-2,3-dihydroxy-3-methylbutanoate + NADP(+) = (2S)-2-acetolactate + NADPH + H(+). The catalysed reaction is (2R,3R)-2,3-dihydroxy-3-methylpentanoate + NADP(+) = (S)-2-ethyl-2-hydroxy-3-oxobutanoate + NADPH + H(+). Its pathway is amino-acid biosynthesis; L-isoleucine biosynthesis; L-isoleucine from 2-oxobutanoate: step 2/4. The protein operates within amino-acid biosynthesis; L-valine biosynthesis; L-valine from pyruvate: step 2/4. Functionally, involved in the biosynthesis of branched-chain amino acids (BCAA). Catalyzes an alkyl-migration followed by a ketol-acid reduction of (S)-2-acetolactate (S2AL) to yield (R)-2,3-dihydroxy-isovalerate. In the isomerase reaction, S2AL is rearranged via a Mg-dependent methyl migration to produce 3-hydroxy-3-methyl-2-ketobutyrate (HMKB). In the reductase reaction, this 2-ketoacid undergoes a metal-dependent reduction by NADPH to yield (R)-2,3-dihydroxy-isovalerate. This Methanosphaerula palustris (strain ATCC BAA-1556 / DSM 19958 / E1-9c) protein is Ketol-acid reductoisomerase (NADP(+)).